The primary structure comprises 759 residues: Phosphoribosylformylglycinamidine synthase subunit PurL (759 aa).

Histidine 61 is an active-site residue. ATP is bound by residues tyrosine 64 and lysine 105. A Mg(2+)-binding site is contributed by glutamate 107. Residues serine 108 to histidine 111 and arginine 130 each bind substrate. Catalysis depends on histidine 109, which acts as the Proton acceptor. Position 131 (aspartate 131) interacts with Mg(2+). Glutamine 260 serves as a coordination point for substrate. Aspartate 288 lines the Mg(2+) pocket. Residue glutamate 332–glutamine 334 coordinates substrate. Residues aspartate 520 and glycine 557 each contribute to the ATP site. Asparagine 558 contributes to the Mg(2+) binding site. Position 560 (serine 560) interacts with substrate.

This sequence belongs to the FGAMS family. In terms of assembly, monomer. Part of the FGAM synthase complex composed of 1 PurL, 1 PurQ and 2 PurS subunits.

The protein localises to the cytoplasm. It carries out the reaction N(2)-formyl-N(1)-(5-phospho-beta-D-ribosyl)glycinamide + L-glutamine + ATP + H2O = 2-formamido-N(1)-(5-O-phospho-beta-D-ribosyl)acetamidine + L-glutamate + ADP + phosphate + H(+). It participates in purine metabolism; IMP biosynthesis via de novo pathway; 5-amino-1-(5-phospho-D-ribosyl)imidazole from N(2)-formyl-N(1)-(5-phospho-D-ribosyl)glycinamide: step 1/2. In terms of biological role, part of the phosphoribosylformylglycinamidine synthase complex involved in the purines biosynthetic pathway. Catalyzes the ATP-dependent conversion of formylglycinamide ribonucleotide (FGAR) and glutamine to yield formylglycinamidine ribonucleotide (FGAM) and glutamate. The FGAM synthase complex is composed of three subunits. PurQ produces an ammonia molecule by converting glutamine to glutamate. PurL transfers the ammonia molecule to FGAR to form FGAM in an ATP-dependent manner. PurS interacts with PurQ and PurL and is thought to assist in the transfer of the ammonia molecule from PurQ to PurL. In Thermoplasma acidophilum (strain ATCC 25905 / DSM 1728 / JCM 9062 / NBRC 15155 / AMRC-C165), this protein is Phosphoribosylformylglycinamidine synthase subunit PurL.